The sequence spans 327 residues: ATP-dependent 6-phosphofructokinase (327 aa).

Residue G12 participates in ATP binding. Residues 22 to 26 (RGVVR) and 55 to 60 (RYSVSD) each bind ADP. Residues 73–74 (RF) and 103–106 (GDGS) contribute to the ATP site. D104 serves as a coordination point for Mg(2+). Residue 127–129 (TID) participates in substrate binding. The Proton acceptor role is filled by D129. An ADP-binding site is contributed by R156. Substrate is bound by residues R164 and 171–173 (MGR). Residues 187-189 (GCE), K213, and 215-217 (KKH) each bind ADP. Residues E224, R245, and 251 to 254 (HIQR) each bind substrate.

Belongs to the phosphofructokinase type A (PFKA) family. ATP-dependent PFK group I subfamily. Prokaryotic clade 'B1' sub-subfamily. In terms of assembly, homotetramer. It depends on Mg(2+) as a cofactor.

It is found in the cytoplasm. It carries out the reaction beta-D-fructose 6-phosphate + ATP = beta-D-fructose 1,6-bisphosphate + ADP + H(+). Its pathway is carbohydrate degradation; glycolysis; D-glyceraldehyde 3-phosphate and glycerone phosphate from D-glucose: step 3/4. Its activity is regulated as follows. Allosterically activated by ADP and other diphosphonucleosides, and allosterically inhibited by phosphoenolpyruvate. Catalyzes the phosphorylation of D-fructose 6-phosphate to fructose 1,6-bisphosphate by ATP, the first committing step of glycolysis. In Yersinia pseudotuberculosis serotype O:1b (strain IP 31758), this protein is ATP-dependent 6-phosphofructokinase.